A 147-amino-acid chain; its full sequence is Ribosomal RNA large subunit methyltransferase H (147 aa).

Residues Leu-64, Gly-96, and 115–120 (FSKMTF) contribute to the S-adenosyl-L-methionine site.

It belongs to the RNA methyltransferase RlmH family. As to quaternary structure, homodimer.

The protein resides in the cytoplasm. The catalysed reaction is pseudouridine(1915) in 23S rRNA + S-adenosyl-L-methionine = N(3)-methylpseudouridine(1915) in 23S rRNA + S-adenosyl-L-homocysteine + H(+). Specifically methylates the pseudouridine at position 1915 (m3Psi1915) in 23S rRNA. This chain is Ribosomal RNA large subunit methyltransferase H, found in Acholeplasma laidlawii (strain PG-8A).